Here is a 160-residue protein sequence, read N- to C-terminus: Cyanate hydratase (160 aa).

Catalysis depends on residues Arg100, Glu103, and Ser126.

The protein belongs to the cyanase family.

It catalyses the reaction cyanate + hydrogencarbonate + 3 H(+) = NH4(+) + 2 CO2. In terms of biological role, catalyzes the reaction of cyanate with bicarbonate to produce ammonia and carbon dioxide. The polypeptide is Cyanate hydratase (Arthroderma otae (strain ATCC MYA-4605 / CBS 113480) (Microsporum canis)).